We begin with the raw amino-acid sequence, 471 residues long: Abscission/NoCut checkpoint regulator (471 aa).

Residues 39 to 64 form a disordered region; sequence GGAGQGREGRSWGEGPRGPGLGRRDL. The segment at 74–133 adopts an FYVE-type zinc-finger fold; sequence ATMESRCYGCAVKFTLFKKEYGCKNCGRAFCSGCLSFSAAVPRTGNTQQKVCKQCHEVLT. 8 residues coordinate Zn(2+): cysteine 80, cysteine 83, cysteine 96, cysteine 99, cysteine 104, cysteine 107, cysteine 125, and cysteine 128. Serine 144 is subject to Phosphoserine. An MIM1-A motif is present at residues 174–187; the sequence is DQMIAERLARLRQE. Lysine 207 participates in a covalent cross-link: Glycyl lysine isopeptide (Lys-Gly) (interchain with G-Cter in SUMO2). Threonine 243 bears the Phosphothreonine mark. Residues 271-299 form a disordered region; sequence KGGGPAASLQNDLNQGGPGSTNSKRQANW. The segment covering 278 to 299 has biased composition (polar residues); the sequence is SLQNDLNQGGPGSTNSKRQANW. 2 positions are modified to phosphoserine: glycine 286 and serine 293. Residues 311–375 are a coiled coil; the sequence is EAALELREEN…RVLQQLTEEA (65 aa). The MIM1-B motif lies at 326–339; sequence ILALAKRLAMLRGQ. Phosphoserine is present on serine 354. Residues 386–412 are disordered; the sequence is PAEQASRPWTQPRGAEPEAQDVDPRPE. The residue at position 463 (serine 463) is a Phosphoserine.

As to quaternary structure, interacts (via MIM1-B) with VPS4A; interaction takes place at the midbody ring following cytokinesis checkpoint activation. In terms of processing, phosphorylated in vitro at Ser-22 by AURKB; however, phosphorylation at this site could not be confirmed in vivo. Detected in brain, heart, skeletal muscle and kidney. Expressed in the liver (at protein level).

Its subcellular location is the cytoplasm. The protein localises to the cytoskeleton. It is found in the microtubule organizing center. It localises to the centrosome. The protein resides in the cleavage furrow. Its subcellular location is the midbody. The protein localises to the midbody ring. Its function is as follows. Key regulator of abscission step in cytokinesis: part of the cytokinesis checkpoint, a process required to delay abscission to prevent both premature resolution of intercellular chromosome bridges and accumulation of DNA damage. Together with CHMP4C, required to retain abscission-competent VPS4 (VPS4A and/or VPS4B) at the midbody ring until abscission checkpoint signaling is terminated at late cytokinesis. Deactivation of AURKB results in dephosphorylation of CHMP4C followed by its dissociation from ZFYVE19/ANCHR and VPS4 and subsequent abscission. The protein is Abscission/NoCut checkpoint regulator (ZFYVE19) of Homo sapiens (Human).